The primary structure comprises 715 residues: Fatty acid oxidation complex subunit alpha (715 aa).

The enoyl-CoA hydratase/isomerase stretch occupies residues 1 to 190 (MIYEGKAITV…KVGAVDAVVA (190 aa)). D297 is a binding site for substrate. The interval 312–715 (KDVKQAAVLG…MAKNGQSFFG (404 aa)) is 3-hydroxyacyl-CoA dehydrogenase. NAD(+)-binding positions include M325, D344, 401 to 403 (VVE), K408, and S430. The active-site For 3-hydroxyacyl-CoA dehydrogenase activity is H451. N454 contributes to the NAD(+) binding site. Residues N501 and Y660 each contribute to the substrate site.

It in the N-terminal section; belongs to the enoyl-CoA hydratase/isomerase family. This sequence in the C-terminal section; belongs to the 3-hydroxyacyl-CoA dehydrogenase family. Heterotetramer of two alpha chains (FadB) and two beta chains (FadA).

It catalyses the reaction a (3S)-3-hydroxyacyl-CoA + NAD(+) = a 3-oxoacyl-CoA + NADH + H(+). The catalysed reaction is a (3S)-3-hydroxyacyl-CoA = a (2E)-enoyl-CoA + H2O. The enzyme catalyses a 4-saturated-(3S)-3-hydroxyacyl-CoA = a (3E)-enoyl-CoA + H2O. It carries out the reaction (3S)-3-hydroxybutanoyl-CoA = (3R)-3-hydroxybutanoyl-CoA. It catalyses the reaction a (3Z)-enoyl-CoA = a 4-saturated (2E)-enoyl-CoA. The catalysed reaction is a (3E)-enoyl-CoA = a 4-saturated (2E)-enoyl-CoA. It participates in lipid metabolism; fatty acid beta-oxidation. Its function is as follows. Involved in the aerobic and anaerobic degradation of long-chain fatty acids via beta-oxidation cycle. Catalyzes the formation of 3-oxoacyl-CoA from enoyl-CoA via L-3-hydroxyacyl-CoA. It can also use D-3-hydroxyacyl-CoA and cis-3-enoyl-CoA as substrate. This chain is Fatty acid oxidation complex subunit alpha, found in Pseudomonas fluorescens (strain ATCC BAA-477 / NRRL B-23932 / Pf-5).